Here is a 503-residue protein sequence, read N- to C-terminus: E3 ubiquitin-protein ligase IE61 (503 aa).

The RING-type zinc-finger motif lies at 19–58 (CAICMSAISGLGKTLPCLHDFCFVCIQTWTSTSAQCPLCR). Disordered regions lie at residues 175 to 194 (AVIT…PSSR), 367 to 418 (SGPI…LFVD), and 445 to 503 (AALP…VRRK). The segment covering 375 to 388 (GGSTSQDTSVSNIH) has biased composition (polar residues). The segment covering 389–403 (RSPPGGSSTQPSSGR) has biased composition (low complexity). Residues 404 to 414 (RPGRPKGVKRR) are compositionally biased toward basic residues. Positions 471 to 480 (PSTSGSSPSP) are enriched in low complexity.

In terms of assembly, interacts with host BTRC; this interaction seems to inactivate SCF-mediated protein degradation in general.

It catalyses the reaction S-ubiquitinyl-[E2 ubiquitin-conjugating enzyme]-L-cysteine + [acceptor protein]-L-lysine = [E2 ubiquitin-conjugating enzyme]-L-cysteine + N(6)-ubiquitinyl-[acceptor protein]-L-lysine.. RING-finger E3 ubiquitin ligase that degrades host SP100, one of the major components of ND10 nuclear bodies, thereby disrupting the organization of these bodies. Also plays a role in the inhibition of host NF-kappa-B pathway by blocking the SCF(BTRC)-mediated addition of ubiquitin chains to host IkappaBalpha/NFKBIA, thereby interfering with its degradation. The sequence is that of E3 ubiquitin-protein ligase IE61 from Cercopithecine herpesvirus 9 (strain DHV) (CeHV-9).